Reading from the N-terminus, the 120-residue chain is Small ribosomal subunit protein uS11 (120 aa).

It belongs to the universal ribosomal protein uS11 family. In terms of assembly, part of the 30S ribosomal subunit. Interacts with proteins S7 and S18. Binds to IF-3.

In terms of biological role, located on the platform of the 30S subunit, it bridges several disparate RNA helices of the 16S rRNA. Forms part of the Shine-Dalgarno cleft in the 70S ribosome. The chain is Small ribosomal subunit protein uS11 from Neorickettsia sennetsu (strain ATCC VR-367 / Miyayama) (Ehrlichia sennetsu).